A 521-amino-acid chain; its full sequence is Bifunctional purine biosynthesis protein PurH (521 aa).

An MGS-like domain is found at methionine 1 to threonine 150.

This sequence belongs to the PurH family.

The catalysed reaction is (6R)-10-formyltetrahydrofolate + 5-amino-1-(5-phospho-beta-D-ribosyl)imidazole-4-carboxamide = 5-formamido-1-(5-phospho-D-ribosyl)imidazole-4-carboxamide + (6S)-5,6,7,8-tetrahydrofolate. It catalyses the reaction IMP + H2O = 5-formamido-1-(5-phospho-D-ribosyl)imidazole-4-carboxamide. It functions in the pathway purine metabolism; IMP biosynthesis via de novo pathway; 5-formamido-1-(5-phospho-D-ribosyl)imidazole-4-carboxamide from 5-amino-1-(5-phospho-D-ribosyl)imidazole-4-carboxamide (10-formyl THF route): step 1/1. The protein operates within purine metabolism; IMP biosynthesis via de novo pathway; IMP from 5-formamido-1-(5-phospho-D-ribosyl)imidazole-4-carboxamide: step 1/1. This Corynebacterium efficiens (strain DSM 44549 / YS-314 / AJ 12310 / JCM 11189 / NBRC 100395) protein is Bifunctional purine biosynthesis protein PurH.